Reading from the N-terminus, the 162-residue chain is uncharacterized protein (162 aa).

Positions 1-49 (MNSRTASARGWFSSRPPTSESDLEPATDGPASETTTLSPEATTFNDTRI) are disordered. Positions 32–46 (SETTTLSPEATTFND) are enriched in polar residues. Residues 62 to 82 (MLLSFGIITVIGLAVALVLYI) form a helical membrane-spanning segment.

It is found in the membrane. This is an uncharacterized protein from Homo sapiens (Human).